Here is a 294-residue protein sequence, read N- to C-terminus: ATP phosphoribosyltransferase (294 aa).

This sequence belongs to the ATP phosphoribosyltransferase family. Long subfamily. It depends on Mg(2+) as a cofactor.

The protein localises to the cytoplasm. It carries out the reaction 1-(5-phospho-beta-D-ribosyl)-ATP + diphosphate = 5-phospho-alpha-D-ribose 1-diphosphate + ATP. The protein operates within amino-acid biosynthesis; L-histidine biosynthesis; L-histidine from 5-phospho-alpha-D-ribose 1-diphosphate: step 1/9. Feedback inhibited by histidine. Functionally, catalyzes the condensation of ATP and 5-phosphoribose 1-diphosphate to form N'-(5'-phosphoribosyl)-ATP (PR-ATP). Has a crucial role in the pathway because the rate of histidine biosynthesis seems to be controlled primarily by regulation of HisG enzymatic activity. In Prosthecochloris aestuarii (strain DSM 271 / SK 413), this protein is ATP phosphoribosyltransferase.